Reading from the N-terminus, the 200-residue chain is Small ribosomal subunit protein uS4 (200 aa).

Positions 22-43 (TGKELERRPYAPGQHGPTQRKK) are disordered. The region spanning 92-170 (QRLDNIVYRL…VPEYVTFDAE (79 aa)) is the S4 RNA-binding domain.

This sequence belongs to the universal ribosomal protein uS4 family. As to quaternary structure, part of the 30S ribosomal subunit. Contacts protein S5. The interaction surface between S4 and S5 is involved in control of translational fidelity.

Its function is as follows. One of the primary rRNA binding proteins, it binds directly to 16S rRNA where it nucleates assembly of the body of the 30S subunit. Functionally, with S5 and S12 plays an important role in translational accuracy. The protein is Small ribosomal subunit protein uS4 of Listeria welshimeri serovar 6b (strain ATCC 35897 / DSM 20650 / CCUG 15529 / CIP 8149 / NCTC 11857 / SLCC 5334 / V8).